The following is a 264-amino-acid chain: COP9 signalosome complex subunit 7b (264 aa).

N-acetylalanine is present on A2. Residues 2–159 (AGEQKPSSNL…QLLEVDFCIG (158 aa)) enclose the PCI domain. A coiled-coil region spans residues 194–237 (RANQYKENHHRTQQQVEAEVSNIKKTLKATASSSAQEMEQQLAE). The span at 223-232 (TASSSAQEME) shows a compositional bias: polar residues. The interval 223 to 264 (TASSSAQEMEQQLAERECPPHTEQRQPTKKMSKVKGLVSSRH) is disordered. Residues 235 to 248 (LAERECPPHTEQRQ) show a composition bias toward basic and acidic residues.

It belongs to the CSN7/EIF3M family. CSN7 subfamily. In terms of assembly, component of the CSN complex, composed of COPS1/GPS1, COPS2, COPS3, COPS4, COPS5, COPS6, COPS7 (COPS7A or COPS7B) and COPS8 and COPS9. In the complex, it probably interacts directly with COPS1, COPS2, COPS4, COPS5, COPS6 and COPS8. Interacts with EIF3S6.

The protein resides in the cytoplasm. It is found in the nucleus. Functionally, component of the COP9 signalosome complex (CSN), a complex involved in various cellular and developmental processes. The CSN complex is an essential regulator of the ubiquitin (Ubl) conjugation pathway by mediating the deneddylation of the cullin subunits of SCF-type E3 ligase complexes, leading to decrease the Ubl ligase activity of SCF-type complexes such as SCF, CSA or DDB2. The complex is also involved in phosphorylation of p53/TP53, JUN, I-kappa-B-alpha/NFKBIA, ITPK1 and IRF8/ICSBP, possibly via its association with CK2 and PKD kinases. CSN-dependent phosphorylation of TP53 and JUN promotes and protects degradation by the Ubl system, respectively. This chain is COP9 signalosome complex subunit 7b (Cops7b), found in Mus musculus (Mouse).